Here is a 347-residue protein sequence, read N- to C-terminus: NADH-quinone oxidoreductase subunit H (347 aa).

9 consecutive transmembrane segments (helical) span residues 22–42 (GVVS…TAYL), 59–79 (PSLA…KLVF), 93–113 (FIIA…VIPI), 124–144 (IGGI…IIIA), 171–191 (MALS…IQIV), 198–218 (PIWL…SILA), 240–260 (VEYS…NMIL), 285–305 (IPGY…FLWI), and 321–341 (GLKV…AILV).

Belongs to the complex I subunit 1 family. As to quaternary structure, NDH-1 is composed of 14 different subunits. Subunits NuoA, H, J, K, L, M, N constitute the membrane sector of the complex.

The protein localises to the cell inner membrane. The enzyme catalyses a quinone + NADH + 5 H(+)(in) = a quinol + NAD(+) + 4 H(+)(out). Its function is as follows. NDH-1 shuttles electrons from NADH, via FMN and iron-sulfur (Fe-S) centers, to quinones in the respiratory chain. The immediate electron acceptor for the enzyme in this species is believed to be ubiquinone. Couples the redox reaction to proton translocation (for every two electrons transferred, four hydrogen ions are translocated across the cytoplasmic membrane), and thus conserves the redox energy in a proton gradient. This subunit may bind ubiquinone. This is NADH-quinone oxidoreductase subunit H from Orientia tsutsugamushi (strain Ikeda) (Rickettsia tsutsugamushi).